The following is a 550-amino-acid chain: Arginine--tRNA ligase (550 aa).

Residues 130 to 140 carry the 'HIGH' region motif; that stretch reads ANPTGPIHIGG.

The protein belongs to the class-I aminoacyl-tRNA synthetase family. Monomer.

The protein localises to the cytoplasm. It carries out the reaction tRNA(Arg) + L-arginine + ATP = L-arginyl-tRNA(Arg) + AMP + diphosphate. In Mycobacterium leprae (strain TN), this protein is Arginine--tRNA ligase (argS).